Reading from the N-terminus, the 278-residue chain is Protein Rv2133c (278 aa).

The sequence is that of Protein Rv2133c from Mycobacterium tuberculosis (strain ATCC 25618 / H37Rv).